A 438-amino-acid chain; its full sequence is MVAGKRTGAAKGSRHNKKYWRKGTNIDDIEDSIHIKSRQAATGGVISEMKDEDLFIVDRTATANKPVVPKLTKKQQAALEKITKNITQEHVTLPKPSTTSKILKKPAKLPRGNAILALKKGPKAAAPAAKKKNFDVWTTDLTPKIPKSKLENQEAAEHFLKVVKKKQPKTPGKSITSLLPAVQIAEGGASYNPESAEYQEYVAKIAGEEQKLIDHEAKIKAGIEPQWEKVTTEHERFLEMAEGLRIHPKYGKDDEEEEEAGNSEKSMKTGGEAEPKSQRVECDRMTKEQKKKKAKAQKLDKEEKRRLEEKAKEQDSHNVYRTKQLHKELDEEEKQRHEESEVRKKEKLINKLTKRQQLGKGKFVDAEDPFLLQEELTGNLRQLKPQGHVLDDRMKSLQRRNMLPIGGDKEKRRIKNRLKSKVVEKRSAKNIVKGSRVI.

Disordered stretches follow at residues methionine 1–glycine 23 and histidine 247–glutamate 346. Over residues glycine 12 to arginine 21 the composition is skewed to basic residues. Basic and acidic residues-rich tracts occupy residues lysine 265–glutamate 288, glutamine 297–asparagine 318, and leucine 325–glutamate 346.

The protein belongs to the NOP53 family.

It is found in the nucleus. The protein resides in the nucleolus. It localises to the nucleoplasm. May play a role in ribosome biogenesis, being required for integration of the 5S RNP into the ribosomal large subunit. The chain is Ribosome biogenesis protein NOP53 from Caenorhabditis elegans.